Reading from the N-terminus, the 874-residue chain is MYQTTAALRSAFLEFFRSNGHQVVDSSSLVPGNDPTLLFTNAGMNQFKDVFLGMDKRSYTRATTAQRCVRAGGKHNDLDNVGYTARHHTFFEMLGNFSFGDYFKEDAIRFGWTFLTEVLMLPKERLCVTIYQTDDEAFEIWNKKIGVAAENIIRIGDNKGAPYASDNFWQMGDTGPCGPCTEIFYDHGDHIWGGRPGSPEEDGDRFIEIWNIVFMQYNRQASGEMLPLPKPSVDTGMGIERIAAIMQGVHSNYEIDIFRALIAKAAEIIGVADLSNKSLRVIADHIRSCAFLVADGVMPSNEGRGYVLRRIIRRAVRHGNKLGATEAFFYKLVPTLIDVMGDAAKGLAETQVIVEKALKAEEEQFARTLERGLGILDSALNELQGDTLDGETVFKLYDTYGFPVDLTADVCRERNIIVDEAGFEAAMAEQRSRAQAAGNFGADYNAALKIDAETAFCGYSELTGNAKVTALYLNGESVPAINTGDDAVVVLDVTPFYAESGGQVGDKGVLMAQGIEFTVNDTQKFGQASGHKGTLTAGSLSVGQVLEAKVDKKLRHRTQLNHSVTHLLHAALRQVLGTHVTQKGSLVDPERLRFDFSHFEAVKPFELKQVEELVNTQIRRNHELKVAEMAIDEAKEKGAMALFGEKYDSQVRVVTMGDFSIELCGGTHVGRTGDIGLFKITSEGGIAAGVRRIEAVTGAAAMAYVAQQQAELEEAASLLKADAHSVVTKLKVQLDKMKQLEKEMQQLKDKLAAAASADLAGDAVVVNGVNVLIKKLEGVEAGALRGLQDELKQKLKSAIIVLGVAQEGKVNLIAGVSNDLIAKIKAGELVAMVATQVGGKGGGRPDMAQAGGSQPENLDAALSQVLPWITERLA.

Zn(2+) is bound by residues histidine 562, histidine 566, cysteine 664, and histidine 668.

The protein belongs to the class-II aminoacyl-tRNA synthetase family. Requires Zn(2+) as cofactor.

It localises to the cytoplasm. The enzyme catalyses tRNA(Ala) + L-alanine + ATP = L-alanyl-tRNA(Ala) + AMP + diphosphate. Functionally, catalyzes the attachment of alanine to tRNA(Ala) in a two-step reaction: alanine is first activated by ATP to form Ala-AMP and then transferred to the acceptor end of tRNA(Ala). Also edits incorrectly charged Ser-tRNA(Ala) and Gly-tRNA(Ala) via its editing domain. This Shewanella oneidensis (strain ATCC 700550 / JCM 31522 / CIP 106686 / LMG 19005 / NCIMB 14063 / MR-1) protein is Alanine--tRNA ligase.